The chain runs to 211 residues: V-type ATP synthase subunit D (211 aa).

It belongs to the V-ATPase D subunit family.

Functionally, produces ATP from ADP in the presence of a proton gradient across the membrane. This chain is V-type ATP synthase subunit D, found in Enterococcus faecalis (strain ATCC 700802 / V583).